We begin with the raw amino-acid sequence, 217 residues long: Phosphoenolpyruvate guanylyltransferase (217 aa).

Residues T150, G165, and S168 each coordinate phosphoenolpyruvate.

This sequence belongs to the CofC family.

The enzyme catalyses phosphoenolpyruvate + GTP + H(+) = enolpyruvoyl-2-diphospho-5'-guanosine + diphosphate. It participates in cofactor biosynthesis; coenzyme F420 biosynthesis. In terms of biological role, guanylyltransferase that catalyzes the activation of phosphoenolpyruvate (PEP) as enolpyruvoyl-2-diphospho-5'-guanosine, via the condensation of PEP with GTP. It is involved in the biosynthesis of coenzyme F420, a hydride carrier cofactor. The polypeptide is Phosphoenolpyruvate guanylyltransferase (Mycobacterium ulcerans (strain Agy99)).